We begin with the raw amino-acid sequence, 350 residues long: Phenylalanine--tRNA ligase alpha subunit (350 aa).

Glu271 lines the Mg(2+) pocket.

It belongs to the class-II aminoacyl-tRNA synthetase family. Phe-tRNA synthetase alpha subunit type 1 subfamily. As to quaternary structure, tetramer of two alpha and two beta subunits. Mg(2+) serves as cofactor.

The protein localises to the cytoplasm. The catalysed reaction is tRNA(Phe) + L-phenylalanine + ATP = L-phenylalanyl-tRNA(Phe) + AMP + diphosphate + H(+). This Verminephrobacter eiseniae (strain EF01-2) protein is Phenylalanine--tRNA ligase alpha subunit.